Reading from the N-terminus, the 227-residue chain is ATP-dependent Clp protease proteolytic subunit (227 aa).

Ser123 acts as the Nucleophile in catalysis. His148 is an active-site residue.

It belongs to the peptidase S14 family. As to quaternary structure, fourteen ClpP subunits assemble into 2 heptameric rings which stack back to back to give a disk-like structure with a central cavity, resembling the structure of eukaryotic proteasomes.

Its subcellular location is the cytoplasm. The enzyme catalyses Hydrolysis of proteins to small peptides in the presence of ATP and magnesium. alpha-casein is the usual test substrate. In the absence of ATP, only oligopeptides shorter than five residues are hydrolyzed (such as succinyl-Leu-Tyr-|-NHMec, and Leu-Tyr-Leu-|-Tyr-Trp, in which cleavage of the -Tyr-|-Leu- and -Tyr-|-Trp bonds also occurs).. Cleaves peptides in various proteins in a process that requires ATP hydrolysis. Has a chymotrypsin-like activity. Plays a major role in the degradation of misfolded proteins. The protein is ATP-dependent Clp protease proteolytic subunit of Chlorobium phaeobacteroides (strain DSM 266 / SMG 266 / 2430).